A 237-amino-acid polypeptide reads, in one-letter code: Aliphatic sulfonates import ATP-binding protein SsuB 1 (237 aa).

Positions 5–221 constitute an ABC transporter domain; that stretch reads LMDIRVEHKA…PRDRRDPLLA (217 aa). 38–45 serves as a coordination point for ATP; that stretch reads GPSGCGKS.

The protein belongs to the ABC transporter superfamily. Aliphatic sulfonates importer (TC 3.A.1.17.2) family. In terms of assembly, the complex is composed of two ATP-binding proteins (SsuB), two transmembrane proteins (SsuC) and a solute-binding protein (SsuA).

The protein localises to the cell inner membrane. It carries out the reaction ATP + H2O + aliphatic sulfonate-[sulfonate-binding protein]Side 1 = ADP + phosphate + aliphatic sulfonateSide 2 + [sulfonate-binding protein]Side 1.. Its function is as follows. Part of the ABC transporter complex SsuABC involved in aliphatic sulfonates import. Responsible for energy coupling to the transport system. This is Aliphatic sulfonates import ATP-binding protein SsuB 1 from Pseudomonas syringae pv. syringae (strain B728a).